Here is a 462-residue protein sequence, read N- to C-terminus: Myo-inositol transporter 3B (462 aa).

The next 10 membrane-spanning stretches (helical) occupy residues 1 to 21 (MAIL…ASSY), 31 to 51 (IILG…ITET), 61 to 81 (IGVN…IGAG), 91 to 111 (LLFA…HYLP), 194 to 214 (LCGF…LGLS), 218 to 238 (LGGL…MSLV), 245 to 265 (GLML…IIGF), 289 to 309 (VVIG…SHLV), 324 to 344 (GSGV…VSYL), and 354 to 374 (GTYG…VFCF).

The protein belongs to the major facilitator superfamily. Sugar transporter (TC 2.A.1.1) family.

Its subcellular location is the cell membrane. It catalyses the reaction myo-inositol(out) + H(+)(out) = myo-inositol(in) + H(+)(in). Its function is as follows. Transporter for myo-inositol. The chain is Myo-inositol transporter 3B from Cryptococcus neoformans var. grubii serotype A (strain H99 / ATCC 208821 / CBS 10515 / FGSC 9487) (Filobasidiella neoformans var. grubii).